The sequence spans 145 residues: Basic phospholipase A2 P'513 (145 aa).

The first 21 residues, 1 to 21 (MYPAHLLLLLAVCVSLLGASA), serve as a signal peptide directing secretion. The propeptide occupies 22–27 (IPPLPL). Disulfide bonds link cysteine 38/cysteine 98, cysteine 54/cysteine 144, cysteine 56/cysteine 72, cysteine 71/cysteine 125, cysteine 78/cysteine 118, cysteine 87/cysteine 111, and cysteine 105/cysteine 116. Tyrosine 55, glycine 57, and glycine 59 together coordinate Ca(2+). The active site involves histidine 75. Aspartate 76 is a binding site for Ca(2+). The active site involves aspartate 119.

The protein belongs to the phospholipase A2 family. Group I subfamily. D49 sub-subfamily. Requires Ca(2+) as cofactor. In terms of tissue distribution, expressed by the venom gland.

It is found in the secreted. The enzyme catalyses a 1,2-diacyl-sn-glycero-3-phosphocholine + H2O = a 1-acyl-sn-glycero-3-phosphocholine + a fatty acid + H(+). PLA2 catalyzes the calcium-dependent hydrolysis of the 2-acyl groups in 3-sn-phosphoglycerides. The sequence is that of Basic phospholipase A2 P'513 from Laticauda laticaudata (Blue-ringed sea krait).